The chain runs to 1576 residues: DNA-directed RNA polymerase subunit beta' (1576 aa).

Positions 64, 66, 79, and 82 each coordinate Zn(2+). 3 residues coordinate Mg(2+): D590, D592, and D594. Positions 928, 1002, 1009, and 1012 each coordinate Zn(2+).

Belongs to the RNA polymerase beta' chain family. As to quaternary structure, the RNAP catalytic core consists of 2 alpha, 1 beta, 1 beta' and 1 omega subunit. When a sigma factor is associated with the core the holoenzyme is formed, which can initiate transcription. Requires Mg(2+) as cofactor. It depends on Zn(2+) as a cofactor.

It catalyses the reaction RNA(n) + a ribonucleoside 5'-triphosphate = RNA(n+1) + diphosphate. DNA-dependent RNA polymerase catalyzes the transcription of DNA into RNA using the four ribonucleoside triphosphates as substrates. In Aquifex pyrophilus, this protein is DNA-directed RNA polymerase subunit beta'.